The following is a 287-amino-acid chain: Intermediate filament family orphan 2 (287 aa).

Positions 1 to 254 (MNLQTMVDTL…RLIKGSADRN (254 aa)) constitute an IF rod domain. The disordered stretch occupies residues 248-287 (KGSADRNSPSPSSVASSDSGSTDEIQDDLEREADVEPMVS). Residues 255–267 (SPSPSSVASSDSG) show a composition bias toward low complexity. Residues 271–287 (EIQDDLEREADVEPMVS) are compositionally biased toward acidic residues.

Belongs to the intermediate filament family.

The sequence is that of Intermediate filament family orphan 2 (Iffo2) from Rattus norvegicus (Rat).